The sequence spans 194 residues: Imidazoleglycerol-phosphate dehydratase (194 aa).

The protein belongs to the imidazoleglycerol-phosphate dehydratase family.

The protein resides in the cytoplasm. It catalyses the reaction D-erythro-1-(imidazol-4-yl)glycerol 3-phosphate = 3-(imidazol-4-yl)-2-oxopropyl phosphate + H2O. The protein operates within amino-acid biosynthesis; L-histidine biosynthesis; L-histidine from 5-phospho-alpha-D-ribose 1-diphosphate: step 6/9. This is Imidazoleglycerol-phosphate dehydratase from Bacillus cereus (strain G9842).